The chain runs to 192 residues: MNESPAPHPLKQRLGGRNLYLVGMMASGKSSTGRPLAEQLSYGFVDTDAVIEQLAGQPIPKIFSEEGEAGFRTMESQVLNAIGQRHSLVVATGGGIVSKPENWGVLHQGIVIWLNPGREELLRRLNADSGNRPLLQTEDPEAAFDCLFAERLPLYCEADLHVEVGAEEPDGIALKIIEFLPQLLSPPPQMNG.

Residue 26 to 31 participates in ATP binding; the sequence is ASGKSS. Residue Ser-30 coordinates Mg(2+). Substrate contacts are provided by Asp-48, Arg-72, and Gly-94. Arg-132 provides a ligand contact to ATP. Substrate is bound at residue Arg-151.

It belongs to the shikimate kinase family. In terms of assembly, monomer. It depends on Mg(2+) as a cofactor.

It is found in the cytoplasm. The catalysed reaction is shikimate + ATP = 3-phosphoshikimate + ADP + H(+). It functions in the pathway metabolic intermediate biosynthesis; chorismate biosynthesis; chorismate from D-erythrose 4-phosphate and phosphoenolpyruvate: step 5/7. Catalyzes the specific phosphorylation of the 3-hydroxyl group of shikimic acid using ATP as a cosubstrate. The sequence is that of Shikimate kinase from Prochlorococcus marinus (strain MIT 9313).